Reading from the N-terminus, the 340-residue chain is Deubiquitinase SseL (340 aa).

H223 is an active-site residue. C285 serves as the catalytic Nucleophile.

Belongs to the peptidase C79 family.

The protein localises to the secreted. It is found in the host cytoplasm. In terms of biological role, effector proteins function to alter host cell physiology and promote bacterial survival in host tissues. This protease targets the host cell ubiquitin pathway by acting as a deubiquitinase in infected host cells. The polypeptide is Deubiquitinase SseL (sseL) (Salmonella paratyphi A (strain ATCC 9150 / SARB42)).